The chain runs to 150 residues: Large ribosomal subunit protein bL9 (150 aa).

This sequence belongs to the bacterial ribosomal protein bL9 family.

Binds to the 23S rRNA. The protein is Large ribosomal subunit protein bL9 of Neisseria meningitidis serogroup C / serotype 2a (strain ATCC 700532 / DSM 15464 / FAM18).